We begin with the raw amino-acid sequence, 483 residues long: Keratin, type II cytoskeletal 8 (483 aa).

A compositionally biased stretch (polar residues) spans 1-16 (MSIRVTQKSYKVSTSG). Residues 1 to 41 (MSIRVTQKSYKVSTSGPRAFSSRSYTSGPGSRISSSSFSRV) are disordered. The tract at residues 1–90 (MSIRVTQKSY…DPNIQAVRTQ (90 aa)) is head. The residue at position 9 (Ser-9) is a Phosphoserine; by PKC/PRKCE. Lys-11 participates in a covalent cross-link: Glycyl lysine isopeptide (Lys-Gly) (interchain with G-Cter in SUMO2). Phosphoserine is present on residues Ser-13, Ser-15, Ser-21, and Ser-22. Arg-23 bears the Omega-N-methylarginine mark. Ser-24 is subject to Phosphoserine; by PKC/PRKCE. Over residues 24 to 41 (SYTSGPGSRISSSSFSRV) the composition is skewed to low complexity. Residue Thr-26 is modified to Phosphothreonine. A phosphoserine mark is found at Ser-27 and Ser-31. Arg-32 bears the Omega-N-methylarginine mark. Residues Ser-34, Ser-37, and Ser-39 each carry the phosphoserine modification. Arg-40 is subject to Omega-N-methylarginine. Residues Ser-43 and Ser-44 each carry the phosphoserine modification. Arg-47 is subject to Asymmetric dimethylarginine; alternate. Arg-47 is subject to Omega-N-methylarginine; alternate. Ser-74 is subject to Phosphoserine; by MAPK. The interval 91 to 126 (EKEQIKTLNNKFASFIDKVRFLEQQNKMLETKWSLL) is coil 1A. In terms of domain architecture, IF rod spans 91 to 402 (EKEQIKTLNN…KLLEGEESRL (312 aa)). N6-malonyllysine is present on Lys-101. Glycyl lysine isopeptide (Lys-Gly) (interchain with G-Cter in SUMO2) cross-links involve residues Lys-122 and Lys-130. The interval 127–143 (QQQKTARSNMDNMFESY) is linker 1. The segment at 144–235 (INNLRRQLET…QLYEEEIREL (92 aa)) is coil 1B. Lys-197 participates in a covalent cross-link: Glycyl lysine isopeptide (Lys-Gly) (interchain with G-Cter in SUMO1); alternate. Lys-197 is covalently cross-linked (Glycyl lysine isopeptide (Lys-Gly) (interchain with G-Cter in SUMO2); alternate). Lys-207 bears the N6-acetyllysine mark. Residue Tyr-228 is modified to Phosphotyrosine. Positions 236 to 259 (QSQISDTSVVLSMDNSRSLDMDSI) are linker 12. A phosphoserine mark is found at Ser-253 and Ser-258. The interval 260-398 (IAEVKAQYED…ATYRKLLEGE (139 aa)) is coil 2. Residues 261–382 (AEVKAQYEDI…EYQELMNVKL (122 aa)) are necessary for interaction with PNN. Lys-264 participates in a covalent cross-link: Glycyl lysine isopeptide (Lys-Gly) (interchain with G-Cter in SUMO2). Ser-274 is modified (phosphoserine). Lys-285 is covalently cross-linked (Glycyl lysine isopeptide (Lys-Gly) (interchain with G-Cter in SUMO2)). Ser-291 carries the phosphoserine modification. Residue Lys-295 forms a Glycyl lysine isopeptide (Lys-Gly) (interchain with G-Cter in SUMO2); alternate linkage. An N6-acetyllysine; alternate modification is found at Lys-295. Residue Lys-304 forms a Glycyl lysine isopeptide (Lys-Gly) (interchain with G-Cter in SUMO2) linkage. A Glycyl lysine isopeptide (Lys-Gly) (interchain with G-Cter in SUMO2); alternate cross-link involves residue Lys-325. N6-acetyllysine; alternate is present on Lys-325. Ser-330 carries the phosphoserine modification. Residue Lys-393 forms a Glycyl lysine isopeptide (Lys-Gly) (interchain with G-Cter in SUMO2) linkage. The interval 399 to 483 (ESRLESGMQN…VSESSDVLPK (85 aa)) is tail. Phosphoserine occurs at positions 400, 404, 410, 417, and 424. At Ser-432 the chain carries Phosphoserine; by CaMK2 and MAPK. Lys-472 participates in a covalent cross-link: Glycyl lysine isopeptide (Lys-Gly) (interchain with G-Cter in SUMO1); alternate. Lys-472 is covalently cross-linked (Glycyl lysine isopeptide (Lys-Gly) (interchain with G-Cter in SUMO2); alternate). Phosphoserine is present on residues Ser-475, Ser-477, and Ser-478.

This sequence belongs to the intermediate filament family. Heterotetramer of two type I and two type II keratins. Forms a heterodimer with KRT18. Associates with KRT20. Interacts with PLEC isoform 1C, when in a heterodimer with KRT18. Interacts with PNN. When associated with KRT19, interacts with DMD. Interacts with TCHP. Interacts with APEX1. Interacts with GPER1. Interacts with EPPK1. Interacts with PKP1 and PKP2. In terms of assembly, (Microbial infection) Interacts with hepatitis C virus/HCV core protein. In terms of processing, phosphorylation on serine residues is enhanced during EGF stimulation and mitosis. Ser-74 phosphorylation plays an important role in keratin filament reorganization. Post-translationally, O-glycosylated. O-GlcNAcylation at multiple sites increases solubility, and decreases stability by inducing proteasomal degradation. O-glycosylated (O-GlcNAcylated), in a cell cycle-dependent manner. As to expression, observed in muscle fibers accumulating in the costameres of myoplasm at the sarcolemma membrane in structures that contain dystrophin and spectrin. Expressed in gingival mucosa and hard palate of the oral cavity.

The protein resides in the cytoplasm. Its subcellular location is the nucleus. The protein localises to the nucleoplasm. It is found in the nucleus matrix. In terms of biological role, together with KRT19, helps to link the contractile apparatus to dystrophin at the costameres of striated muscle. This chain is Keratin, type II cytoskeletal 8 (KRT8), found in Homo sapiens (Human).